An 803-amino-acid polypeptide reads, in one-letter code: Volume-regulated anion channel subunit LRRC8C (803 aa).

The Cytoplasmic segment spans residues 1–22 (MIPVTEFRQFSEQQPAFRVLKP). A helical membrane pass occupies residues 23-43 (WWDVFTDYLSVAMLMIGVFGC). At 44-125 (TLQVMQDKII…YERALHWYAK (82 aa)) the chain is on the extracellular side. 2 disulfide bridges follow: cysteine 54-cysteine 308 and cysteine 115-cysteine 293. N-linked (GlcNAc...) asparagine glycosylation is found at asparagine 64 and asparagine 70. Residues 126–146 (YFPYLVLIHTLVFMLCSNFWF) traverse the membrane as a helical segment. Topologically, residues 147–266 (KFPGSSSKIE…ILYAMYVRQT (120 aa)) are cytoplasmic. Residues 177 to 209 (EVSGEDSEEKDNRKNNMSRSNTTQSGPEGSLVN) are disordered. A compositionally biased stretch (polar residues) spans 191–209 (NNMSRSNTTQSGPEGSLVN). Serine 212 and serine 215 each carry phosphoserine. The chain crosses the membrane as a helical span at residues 267 to 287 (VLKVIKFLIIIAYNSALVSKV). Topologically, residues 288-320 (QFTVDCNVDIQDMTGYKNFSCNHTMAHLFSKLS) are extracellular. A helical transmembrane segment spans residues 321-341 (FCYLCFVSIYGLTCLYTLYWL). Residues 342 to 803 (FYRSLKEYSF…SDVREQMKTE (462 aa)) are Cytoplasmic-facing. LRR repeat units lie at residues 397 to 419 (ENKL…QKLQ), 420 to 443 (TNAH…VFEI), 446 to 465 (LQSL…TIAQ), 468 to 490 (NLQE…SFLK), 492 to 513 (NLKV…MYGL), 515 to 536 (NLEE…VTLE), 543 to 563 (SLKI…VVDV), 566 to 586 (HLQK…NNLK), 590 to 611 (NLTE…VFSL), 613 to 634 (SLQE…VSFQ), 638 to 659 (KLTV…IKKL), 661 to 682 (SLER…LFLC), 684 to 705 (KIRY…IGVL), 707 to 728 (SLQY…LYFC), 730 to 751 (KLKT…IGNL), 753 to 774 (FLSY…LGDC), and 776 to 799 (ALKR…VREQ).

This sequence belongs to the LRRC8 family. Heterohexamer; oligomerizes with other LRRC8 proteins (LRRC8A, LRRC8B, LRRC8D and/or LRRC8E) to form a heterohexamer. Homoheptamer; inactive, likely because it is not targeted to the plasma membrane in the absence of LRRC8A. In vivo, the subunit composition may depend primarily on expression levels, and heterooligomeric channels containing various proportions of the different LRRC8 proteins may coexist.

The protein resides in the cell membrane. Its subcellular location is the endoplasmic reticulum membrane. It carries out the reaction chloride(in) = chloride(out). It catalyses the reaction iodide(out) = iodide(in). The catalysed reaction is taurine(out) = taurine(in). The enzyme catalyses 2',3'-cGAMP(out) = 2',3'-cGAMP(in). In terms of biological role, non-essential component of the volume-regulated anion channel (VRAC, also named VSOAC channel), an anion channel required to maintain a constant cell volume in response to extracellular or intracellular osmotic changes. The VRAC channel conducts iodide better than chloride and can also conduct organic osmolytes like taurine. Plays a redundant role in the efflux of amino acids, such as aspartate and glutamate, in response to osmotic stress. The VRAC channel also mediates transport of immunoreactive cyclic dinucleotide GMP-AMP (2'-3'-cGAMP), an immune messenger produced in response to DNA virus in the cytosol. Channel activity requires LRRC8A plus at least one other family member (LRRC8B, LRRC8C, LRRC8D or LRRC8E); channel characteristics depend on the precise subunit composition. The sequence is that of Volume-regulated anion channel subunit LRRC8C from Bos taurus (Bovine).